The following is a 63-amino-acid chain: Alpha-conotoxin-like PuSG1.1 (63 aa).

Residues 1–21 (MRCLAFLVVTLLLFTATATTG) form the signal peptide. The propeptide occupies 22–43 (ASNGMNAAASGEAPDSISLAVR). 2 cysteine pairs are disulfide-bonded: Cys-46-Cys-52 and Cys-47-Cys-60. The segment at 48–50 (PDP) is lacks the Ser-Xaa-Pro motif that is crucial for potent interaction with nAChR.

It belongs to the conotoxin A superfamily. Expressed by the salivary gland.

It localises to the secreted. Alpha-conopeptides-like may act on postsynaptic membranes, they bind to the nicotinic acetylcholine receptors (nAChR) and thus inhibit them. Has possibly a distinct nAChR binding mode from other alpha-conotoxins, due to a different three residue motif (lacks the Ser-Xaa-Pro motif). The sequence is that of Alpha-conotoxin-like PuSG1.1 from Conus pulicarius (Flea-bitten cone).